Reading from the N-terminus, the 193-residue chain is dCTP deaminase (193 aa).

DCTP contacts are provided by residues 110–115 (RSSLAR), Asp128, 136–138 (VLE), Tyr171, Lys178, and Gln182. The Proton donor/acceptor role is filled by Glu138. Residues 169–193 (RPYNRRQDAKYKDQQGAVASRIDKD) are disordered.

Belongs to the dCTP deaminase family. Homotrimer.

The enzyme catalyses dCTP + H2O + H(+) = dUTP + NH4(+). It participates in pyrimidine metabolism; dUMP biosynthesis; dUMP from dCTP (dUTP route): step 1/2. Its function is as follows. Catalyzes the deamination of dCTP to dUTP. The chain is dCTP deaminase from Pectobacterium carotovorum subsp. carotovorum (strain PC1).